The chain runs to 274 residues: Large ribosomal subunit protein uL2 (274 aa).

The tract at residues 224–274 (VAMNPVDHPHGGGEGRTSGGRHPVTPWGIPTKGYKTRRNKRSNKLIVQKRK) is disordered. The segment covering 257-274 (YKTRRNKRSNKLIVQKRK) has biased composition (basic residues).

Belongs to the universal ribosomal protein uL2 family. Part of the 50S ribosomal subunit. Forms a bridge to the 30S subunit in the 70S ribosome.

In terms of biological role, one of the primary rRNA binding proteins. Required for association of the 30S and 50S subunits to form the 70S ribosome, for tRNA binding and peptide bond formation. It has been suggested to have peptidyltransferase activity; this is somewhat controversial. Makes several contacts with the 16S rRNA in the 70S ribosome. The chain is Large ribosomal subunit protein uL2 from Francisella tularensis subsp. mediasiatica (strain FSC147).